A 682-amino-acid polypeptide reads, in one-letter code: Potassium-transporting ATPase ATP-binding subunit (682 aa).

4 helical membrane passes run 34–54, 58–78, 219–239, and 254–274; these read PVMF…LAMV, IAGS…TVLF, IALT…TATL, and VLVA…LSAI. D307 (4-aspartylphosphate intermediate) is an active-site residue. ATP contacts are provided by residues D344, E348, 377–384, and K395; that span reads FTAQSRMS. Mg(2+) contacts are provided by D518 and D522. The next 3 helical transmembrane spans lie at 588–608, 616–636, and 662–682; these read FAII…LNVM, AILS…PLAL, and LVVP…LGLA.

The protein belongs to the cation transport ATPase (P-type) (TC 3.A.3) family. Type IA subfamily. The system is composed of three essential subunits: KdpA, KdpB and KdpC.

Its subcellular location is the cell inner membrane. The enzyme catalyses K(+)(out) + ATP + H2O = K(+)(in) + ADP + phosphate + H(+). Functionally, part of the high-affinity ATP-driven potassium transport (or Kdp) system, which catalyzes the hydrolysis of ATP coupled with the electrogenic transport of potassium into the cytoplasm. This subunit is responsible for energy coupling to the transport system and for the release of the potassium ions to the cytoplasm. This chain is Potassium-transporting ATPase ATP-binding subunit, found in Salmonella paratyphi B (strain ATCC BAA-1250 / SPB7).